We begin with the raw amino-acid sequence, 146 residues long: UPF0260 protein Sden_1632 (146 aa).

It belongs to the UPF0260 family.

The chain is UPF0260 protein Sden_1632 from Shewanella denitrificans (strain OS217 / ATCC BAA-1090 / DSM 15013).